The following is a 31-amino-acid chain: Nemertide alpha-2 (31 aa).

Disulfide bonds link C2–C16, C9–C20, and C15–C26. A 4-hydroxyproline mark is found at P28 and P29.

It belongs to the nemertide family. Confined to the epidermis and to the mucus layer.

It is found in the secreted. Toxin with similar potency against both insect and mammalian sodium channels (Nav). Delays the inactivation of most Nav channels tested (B.germanica (BgNav1); EC(50)=87.2 nM, human Nav1.1/SCN1A; EC(50)=125.8 nM, rat Nav1.2/SCN2A; EC(50)=97.9 nM, rat Nav1.3/SCN3A; EC(50)=127.7 nM, rat Nav1.4/SCN4A; EC(50)=1150.3 nM, human Nav1.5/SCN5A; EC(50)=149.2 nM, mouse Nav1.6/SCN8A; EC(50)=1361.8 nM, human Nav1.9/SCN9A; EC(50)=1296.7 nM). Inactivation is completely prevented by a concentration of 1 uM, resulting in sustained, non-inactivating current. In addition, the toxin significantly enhances the recovery from inactivation, and the open state is not required for the toxin to interact with the channel. In vivo, injection into brine shrimp (Artemia salina) stops movement or causes death after 24 hours (EC(50)=2.9 uM). This Lineus longissimus (Bootlace worm) protein is Nemertide alpha-2.